A 1026-amino-acid chain; its full sequence is Lon protease homolog, mitochondrial (1026 aa).

Residues 1 to 29 (MLGTRVTRAVYTRAPLKLQLRALGLHRRY) constitute a mitochondrion transit peptide. 2 disordered regions span residues 29–55 (YVHN…DKKL) and 185–206 (ASEE…DKVS). The Lon N-terminal domain maps to 62–345 (MLALPISRRP…KSLLVLKKEL (284 aa)). The span at 185 to 194 (ASEETKDEET) shows a compositional bias: acidic residues. A compositionally biased stretch (basic and acidic residues) spans 195-206 (VDKTESATDKVS). Position 497-504 (497-504 (GPPGVGKT)) interacts with ATP. Positions 711–785 (TEPLVSTSEE…EEEEDTSMIV (75 aa)) are disordered. Over residues 714–737 (LVSTSEEPQLSQTNQNISSSSAED) the composition is skewed to polar residues. Positions 815-1001 (TTPPGVIMGL…DDIYKRLFSG (187 aa)) constitute a Lon proteolytic domain. Catalysis depends on residues Ser907 and Lys950.

It belongs to the peptidase S16 family. As to quaternary structure, homohexamer or homoheptamer. Organized in a ring with a central cavity.

It is found in the mitochondrion matrix. The catalysed reaction is Hydrolysis of proteins in presence of ATP.. In terms of biological role, ATP-dependent serine protease that mediates the selective degradation of misfolded, unassembled or oxidatively damaged polypeptides as well as certain short-lived regulatory proteins in the mitochondrial matrix. May also have a chaperone function in the assembly of inner membrane protein complexes. Participates in the regulation of mitochondrial gene expression and in the maintenance of the integrity of the mitochondrial genome. Binds to mitochondrial DNA in a site-specific manner. The sequence is that of Lon protease homolog, mitochondrial from Candida glabrata (strain ATCC 2001 / BCRC 20586 / JCM 3761 / NBRC 0622 / NRRL Y-65 / CBS 138) (Yeast).